Here is a 394-residue protein sequence, read N- to C-terminus: MKILIINSGSSSIKYQLMVMPANEVICSGMIDRIGLETSNITFKTVSNSFEEILPVPTHKVGLQKVADMLLDAETGVIKTTSEITAVGHRVVHGGSYFSNTTVITEEVKEKIKELSELAPLHNPAHLVGINVAEEIFASAKQVAVFDTAFHQTIPVEAHKYAIPNFLLTEHKVRVYGFHGTSHKYVSEKAINYLEKGSKIITIHLGNGCSMTAVKDGKSIDTTMGFSPANGLVMGTRAGDIDQSVIFYMVKSLGYTPDEVNSILLKQSGMLGLTGYSDLRDIESKASEGNKDCQLALLMNAYRIRKTIGSYAAALNGLDAIVFTAGIGENSSFMRNLICTDMDYFGIEIDKEKNQIRSKELREINTPNSIVKILVVPTDEEFEIANQVYQLLEN.

Asparagine 7 contacts Mg(2+). Lysine 14 provides a ligand contact to ATP. Arginine 90 is a substrate binding site. Aspartate 147 acts as the Proton donor/acceptor in catalysis. ATP-binding positions include 204-208 (HLGNG), 278-280 (DLR), and 326-330 (GIGEN). Residue glutamate 380 coordinates Mg(2+).

It belongs to the acetokinase family. Homodimer. Mg(2+) serves as cofactor. Mn(2+) is required as a cofactor.

The protein resides in the cytoplasm. The enzyme catalyses acetate + ATP = acetyl phosphate + ADP. It participates in metabolic intermediate biosynthesis; acetyl-CoA biosynthesis; acetyl-CoA from acetate: step 1/2. Functionally, catalyzes the formation of acetyl phosphate from acetate and ATP. Can also catalyze the reverse reaction. This chain is Acetate kinase, found in Flavobacterium johnsoniae (strain ATCC 17061 / DSM 2064 / JCM 8514 / BCRC 14874 / CCUG 350202 / NBRC 14942 / NCIMB 11054 / UW101) (Cytophaga johnsonae).